Reading from the N-terminus, the 202-residue chain is Imidazoleglycerol-phosphate dehydratase (202 aa).

It belongs to the imidazoleglycerol-phosphate dehydratase family.

Its subcellular location is the cytoplasm. It catalyses the reaction D-erythro-1-(imidazol-4-yl)glycerol 3-phosphate = 3-(imidazol-4-yl)-2-oxopropyl phosphate + H2O. It participates in amino-acid biosynthesis; L-histidine biosynthesis; L-histidine from 5-phospho-alpha-D-ribose 1-diphosphate: step 6/9. The sequence is that of Imidazoleglycerol-phosphate dehydratase from Clavibacter michiganensis subsp. michiganensis (strain NCPPB 382).